The primary structure comprises 438 residues: Actin-like protein 7A (438 aa).

Residues 36–56 (ASLKDGPAKRAVWVRRDHSEP) are required for interaction with TES.

This sequence belongs to the actin family. As to quaternary structure, interacts (via N-terminus) with TES (via LIM domain 2). Heterodimer with TES; the heterodimer interacts with ENAH to form a heterotrimer. Interacts with ACTL9. Interacts with CYLC1; the interaction may be relevant for proper acrosome attachment to the nuclear envelope.

It is found in the cytoplasm. It localises to the cytoskeleton. The protein resides in the golgi apparatus. The protein localises to the nucleus. Essential for normal spermatogenesis and male fertility. Required for normal sperm head morphology, acroplaxome formation, acrosome attachment, and acrosome granule stability. May anchor and stabilize acrosomal adherence to the acroplaxome at least in part by facilitating the presence of F-actin in the subacrosomal space. May play an important role in formation and fusion of Golgi-derived vesicles during acrosome biogenesis. The sequence is that of Actin-like protein 7A (ACTL7A) from Bos taurus (Bovine).